A 294-amino-acid chain; its full sequence is Cytidine deaminase (294 aa).

CMP/dCMP-type deaminase domains are found at residues 48 to 168 (DEDA…FGPK) and 186 to 294 (LTGD…VLLG). A substrate-binding site is contributed by 89 to 91 (NME). Zn(2+) is bound at residue His102. Residue Glu104 is the Proton donor of the active site. The Zn(2+) site is built by Cys129 and Cys132.

This sequence belongs to the cytidine and deoxycytidylate deaminase family. Homodimer. It depends on Zn(2+) as a cofactor.

The catalysed reaction is cytidine + H2O + H(+) = uridine + NH4(+). The enzyme catalyses 2'-deoxycytidine + H2O + H(+) = 2'-deoxyuridine + NH4(+). In terms of biological role, this enzyme scavenges exogenous and endogenous cytidine and 2'-deoxycytidine for UMP synthesis. The chain is Cytidine deaminase from Salmonella choleraesuis (strain SC-B67).